We begin with the raw amino-acid sequence, 476 residues long: Small ribosomal subunit protein mS29 (476 aa).

A mitochondrion-targeting transit peptide spans 1–54 (MLPKFRSRSSIIKNTERISNILSGGKLTVCGSKLGGLYTFEKCTFNKYYSSSQY). A disordered region spans residues 58–97 (GRPVGGNIHSSSNQQRQKNSEAPRINEIPPSTSSVEKSTT). Polar residues-rich tracts occupy residues 65-74 (IHSSSNQQRQ) and 86-97 (PPSTSSVEKSTT). ATP is bound at residue 200 to 207 (GAPGSGRS).

The protein belongs to the mitochondrion-specific ribosomal protein mS29 family. As to quaternary structure, component of the mitochondrial small ribosomal subunit (mt-SSU). Mature yeast 74S mitochondrial ribosomes consist of a small (37S) and a large (54S) subunit. The 37S small subunit contains a 15S ribosomal RNA (15S mt-rRNA) and at least 32 different proteins. The 54S large subunit contains a 21S rRNA (21S mt-rRNA) and at least 45 different proteins.

It localises to the mitochondrion. Its function is as follows. Component of the mitochondrial ribosome (mitoribosome), a dedicated translation machinery responsible for the synthesis of mitochondrial genome-encoded proteins, including at least some of the essential transmembrane subunits of the mitochondrial respiratory chain. The mitoribosomes are attached to the mitochondrial inner membrane and translation products are cotranslationally integrated into the membrane. mS29 binds GTP and is probably an active GTPase. GTP hydrolysis may be linked to subunit association. mS29 also has an extraribosomal function, being required for maintenance of mitochondrial DNA. This chain is Small ribosomal subunit protein mS29 (rsm23), found in Schizosaccharomyces pombe (strain 972 / ATCC 24843) (Fission yeast).